The primary structure comprises 225 residues: Proteoglycan 3 (225 aa).

Residues methionine 1 to alanine 17 form the signal peptide. The region spanning cysteine 107–serine 224 is the C-type lectin domain. 2 disulfides stabilise this stretch: cysteine 128–cysteine 223 and cysteine 200–cysteine 215.

Expressed in bone marrow. Not detected in placenta.

The protein localises to the cytoplasmic granule. Possesses similar cytotoxic and cytostimulatory activities to PRG2/MBP. In vitro, stimulates neutrophil superoxide production and IL8 release, and histamine and leukotriene C4 release from basophils. This Homo sapiens (Human) protein is Proteoglycan 3.